The following is a 184-amino-acid chain: Adenine phosphoribosyltransferase (184 aa).

It belongs to the purine/pyrimidine phosphoribosyltransferase family. As to quaternary structure, homodimer.

It localises to the cytoplasm. The catalysed reaction is AMP + diphosphate = 5-phospho-alpha-D-ribose 1-diphosphate + adenine. It functions in the pathway purine metabolism; AMP biosynthesis via salvage pathway; AMP from adenine: step 1/1. Its function is as follows. Catalyzes a salvage reaction resulting in the formation of AMP, that is energically less costly than de novo synthesis. The chain is Adenine phosphoribosyltransferase from Myxococcus xanthus (strain DK1622).